The sequence spans 232 residues: Enolase-phosphatase E1 (232 aa).

Belongs to the HAD-like hydrolase superfamily. MasA/MtnC family. Monomer. Mg(2+) is required as a cofactor.

It carries out the reaction 5-methylsulfanyl-2,3-dioxopentyl phosphate + H2O = 1,2-dihydroxy-5-(methylsulfanyl)pent-1-en-3-one + phosphate. It functions in the pathway amino-acid biosynthesis; L-methionine biosynthesis via salvage pathway; L-methionine from S-methyl-5-thio-alpha-D-ribose 1-phosphate: step 3/6. The protein operates within amino-acid biosynthesis; L-methionine biosynthesis via salvage pathway; L-methionine from S-methyl-5-thio-alpha-D-ribose 1-phosphate: step 4/6. In terms of biological role, bifunctional enzyme that catalyzes the enolization of 2,3-diketo-5-methylthiopentyl-1-phosphate (DK-MTP-1-P) into the intermediate 2-hydroxy-3-keto-5-methylthiopentenyl-1-phosphate (HK-MTPenyl-1-P), which is then dephosphorylated to form the acireductone 1,2-dihydroxy-3-keto-5-methylthiopentene (DHK-MTPene). In Xanthomonas campestris pv. campestris (strain 8004), this protein is Enolase-phosphatase E1.